The following is a 164-amino-acid chain: Probable Brix domain-containing ribosomal biogenesis protein (164 aa).

The Brix domain maps to 1-164 (MIITTSRKPS…IKTVKILDIE (164 aa)).

Its function is as follows. Probably involved in the biogenesis of the ribosome. The sequence is that of Probable Brix domain-containing ribosomal biogenesis protein from Methanococcus maripaludis (strain DSM 14266 / JCM 13030 / NBRC 101832 / S2 / LL).